A 101-amino-acid polypeptide reads, in one-letter code: Small ribosomal subunit protein uS14 (101 aa).

It belongs to the universal ribosomal protein uS14 family. As to quaternary structure, part of the 30S ribosomal subunit. Contacts proteins S3 and S10.

Its function is as follows. Binds 16S rRNA, required for the assembly of 30S particles and may also be responsible for determining the conformation of the 16S rRNA at the A site. In Ralstonia pickettii (strain 12J), this protein is Small ribosomal subunit protein uS14.